Here is a 93-residue protein sequence, read N- to C-terminus: uncharacterized protein (93 aa).

This is an uncharacterized protein from Escherichia coli (strain K12).